The following is a 150-amino-acid chain: FAD synthase (150 aa).

ATP is bound by residues 8-9 (AF), 13-16 (HPGH), Asp-95, and His-122.

The protein belongs to the archaeal FAD synthase family. As to quaternary structure, homodimer. A divalent metal cation is required as a cofactor.

The enzyme catalyses FMN + ATP + H(+) = FAD + diphosphate. It participates in cofactor biosynthesis; FAD biosynthesis; FAD from FMN: step 1/1. Functionally, catalyzes the transfer of the AMP portion of ATP to flavin mononucleotide (FMN) to produce flavin adenine dinucleotide (FAD) coenzyme. In Methanobrevibacter ruminantium (strain ATCC 35063 / DSM 1093 / JCM 13430 / OCM 146 / M1) (Methanobacterium ruminantium), this protein is FAD synthase.